Reading from the N-terminus, the 205-residue chain is CASP-like protein 2A1 (205 aa).

The interval Met-1–Asp-25 is disordered. The Cytoplasmic portion of the chain corresponds to Met-1–Thr-34. Residues Ala-35–Leu-55 form a helical membrane-spanning segment. At Lys-56–Tyr-76 the chain is on the extracellular side. The chain crosses the membrane as a helical span at residues Leu-77–Met-97. Residues Pro-98–Arg-105 lie on the Cytoplasmic side of the membrane. Residues Ala-106–Val-126 traverse the membrane as a helical segment. Topologically, residues Ser-127–Lys-156 are extracellular. The helical transmembrane segment at Ala-157–Val-177 threads the bilayer. The Cytoplasmic segment spans residues Ser-178–Ser-205.

Belongs to the Casparian strip membrane proteins (CASP) family. Homodimer and heterodimers.

The protein resides in the cell membrane. The sequence is that of CASP-like protein 2A1 from Ricinus communis (Castor bean).